A 122-amino-acid polypeptide reads, in one-letter code: Large ribosomal subunit protein uL14 (122 aa).

Belongs to the universal ribosomal protein uL14 family. As to quaternary structure, part of the 50S ribosomal subunit. Forms a cluster with proteins L3 and L19. In the 70S ribosome, L14 and L19 interact and together make contacts with the 16S rRNA in bridges B5 and B8.

In terms of biological role, binds to 23S rRNA. Forms part of two intersubunit bridges in the 70S ribosome. This is Large ribosomal subunit protein uL14 from Geobacillus sp. (strain WCH70).